The sequence spans 399 residues: Forkhead box protein I3 (399 aa).

Disordered stretches follow at residues 87 to 109 (AGAQ…GSAA), 221 to 287 (KRRR…ASTL), and 307 to 353 (SSSS…STVG). The span at 96–109 (PSASAPASPAGSAA) shows a compositional bias: low complexity. A phosphoserine mark is found at Ser99 and Ser103. The segment at residues 129–223 (RPPYSYSALI…DNGNFRRKRR (95 aa)) is a DNA-binding region (fork-head). A Nuclear localization signal motif is present at residues 219–225 (RRKRRRR). Composition is skewed to polar residues over residues 228 to 248 (ASSN…SSRL) and 258 to 267 (SPSSILRPSQ). Phosphoserine is present on residues Ser258, Ser266, and Ser268. Polar residues-rich tracts occupy residues 275–287 (TKST…ASTL), 307–317 (SSSSMGNQRTL), and 328–353 (QLPS…STVG). Positions 385-393 (SMVNSLIYP) match the 9aaTAD motif.

Phosphorylation promotes the transcription factor activity. Dephosphorylation by protein phosphatase 2A (PP2A) reduces its activity. Specifically expressed in the epithelium in developing ectodermal appendages. Expressed in pharyngeal endoderm and ectoderm. Expressed in pre-placodal ectoderm. Down-regulated as the otic placode is induced. Expressed in teeth and hair follicles throughout embryogenesis. Expressed in mammary glands only during the earliest stages of development.

Its subcellular location is the nucleus. Its function is as follows. Transcription factor required for pharyngeal arch development, which is involved in hair, ear, jaw and dental development. May act as a pioneer transcription factor during pharyngeal arch development. Required for epithelial cell differentiation within the epidermis. Acts at multiple stages of otic placode induction: necessary for preplacodal ectoderm to execute an inner ear program. Required for hair follicle stem cell specification. Acts downstream of TBX1 for the formation of the thymus and parathyroid glands from the third pharyngeal pouch. This Mus musculus (Mouse) protein is Forkhead box protein I3.